The primary structure comprises 177 residues: HVA22-like protein a (177 aa).

Helical transmembrane passes span V18 to E38, Q47 to K67, and L68 to I88.

This sequence belongs to the DP1 family. In terms of tissue distribution, predominantly expressed in flower buds and stem.

Its subcellular location is the membrane. The polypeptide is HVA22-like protein a (HVA22A) (Arabidopsis thaliana (Mouse-ear cress)).